A 234-amino-acid chain; its full sequence is Chalcone--flavanone isomerase 2 (234 aa).

Substrate is bound by residues threonine 50, asparagine 115, and serine 192.

This sequence belongs to the chalcone isomerase family.

It carries out the reaction a chalcone = a flavanone.. Its pathway is secondary metabolite biosynthesis; flavonoid biosynthesis. Its function is as follows. Catalyzes the intramolecular cyclization of bicyclic chalcones into tricyclic (S)-flavanones. Responsible for the isomerization of 4,2',4',6'-tetrahydroxychalcone (also termed chalcone) into naringenin. The protein is Chalcone--flavanone isomerase 2 (CHI2) of Vitis vinifera (Grape).